A 336-amino-acid polypeptide reads, in one-letter code: Cytochrome P450 monooxygenase lcsN (336 aa).

Position 271 (Cys-271) interacts with heme.

The protein belongs to the cytochrome P450 family. It depends on heme as a cofactor.

Its pathway is secondary metabolite biosynthesis. In terms of biological role, cytochrome P450 monooxygenase; part of the gene cluster that mediates the biosynthesis of the lipopeptide antibiotics leucinostatins that show extensive biological activities, including antimalarial, antiviral, antibacterial, antifungal, and antitumor activities, as well as phytotoxic. Leucinostatin A contains nine amino acid residues, including the unusual amino acid 4-methyl-L-proline (MePro), 2-amino-6-hydroxy-4-methyl-8-oxodecanoic acid (AHyMeOA), 3-hydroxyleucine (HyLeu), alpha-aminoisobutyric acid (AIB), beta-Ala, a 4-methylhex-2-enoic acid at the N-terminus as well as a N1,N1-dimethylpropane-1,2-diamine (DPD) at the C-terminus. The biosynthesis of leucinostatins is probably initiated with the assembly of 4-methylhex-2-enoic acid by a reducing PKS. Two reducing polyketide synthases, lcsB and lcsC, have been identified in the cluster and it is not clear which is the one that assembles 4-methylhex-2-enoic acid since both contain KS, AT, DH, cMT, ER, KR and ACP domains. The polyketide residue might be transferred to the NRPS lcsA, mediated by two additional enzymes, the acyl-CoA ligase lcsD and the thioesterase lcsE. The linear polyketide carboxylic acid, which is released from PKS, is converted to a CoA thioester by lcsD, and then lcsE hydrolyzes the thiol bond and shuttles the polyketide intermediate to lcsA. The C domain of the first module catalyzed the condensation of 4-methylhex-2-enoic acid and MePro carried by domain A1, followed by successive condensations of nine amino acids to trigger the elongation of the linear peptide. A5 and A6 domains of lcsA are proposed to incorporate leucine, A2 AHyMeOA, and A3 incorporates HyLeu. A4, A7 and A8 incorporate AIB. The AHyMeOA in leucinostatin A activated by the A2 might be produced by the second PKS (lcsB or lcsC) present within the cluster. The MePro is probably produced via leucine cyclization and may originate from a separate pathway, independent of the cluster. Another nonproteinogenic amino acid, beta-Ala, could be produced by an aspartic acid decarboxylase also localized outside of the cluster. Two candidates are VFPBJ_01400 and VFPBJ_10476. The final peptide scaffold may be released by the NAD(P)H-dependent thioester reductase (TE) at the C-terminal region of lcsA. Transamination of the lcsA product by the transaminase lcsP may produce DPD at the C-terminus. Further hydroxylation steps performed alternatively by the cytochrome P450 monooxygenases lcsI, lcsK and lcsN then yield the non-methylated leucinostatins precursor. It is also possible that leucines can be hydroxylated prior to their incorporation into the peptide. Varying extents of methylation then lead to the formation of leucinostatins A and B. This is Cytochrome P450 monooxygenase lcsN from Purpureocillium lilacinum (Paecilomyces lilacinus).